Reading from the N-terminus, the 1096-residue chain is Lysine-specific demethylase 4B (1096 aa).

The JmjN domain occupies 15–57; that stretch reads IMTFRPTMEEFKDFNKYVAYIESQGAHRAGLAKIIPPKEWKPR. Y133 is a 2-oxoglutarate binding site. Residues 146–309 enclose the JmjC domain; sequence VAQWNIGSLR…YGKVATQCTC (164 aa). Fe cation contacts are provided by H189 and E191. Positions 199 and 207 each coordinate 2-oxoglutarate. Zn(2+)-binding residues include C235 and H241. 2-oxoglutarate is bound at residue K242. H277 lines the Fe cation pocket. 2 residues coordinate Zn(2+): C307 and C309. The span at 369–382 shows a compositional bias: basic residues; that stretch reads LLRRSHRKRSQPKK. Disordered stretches follow at residues 369–478 and 557–649; these read LLRR…SEEA and KGPT…VSDP. Residues 391–406 are compositionally biased toward low complexity; sequence PGEGTAGAALLEEAGG. Residues 413-425 show a composition bias toward acidic residues; that stretch reads GPEVDPEEEEEEP. Residues 430-443 show a composition bias toward basic and acidic residues; sequence HGREAEGAEEDGRG. Basic residues predominate over residues 444-458; that stretch reads KLRPTKAKSERKKKS. S566 is subject to Phosphoserine. The residue at position 602 (K602) is an N6-acetyllysine. The segment covering 632–648 has biased composition (acidic residues); it reads SSDEEASPFSGEEDVSD. Residues 731 to 789 form a PHD-type 1 zinc finger; sequence MCFTSGGENTEPLPANSYIGDDGTSPLIACGKCCLQVHASCYGIRPELVNEGWTCSRCA. The segment at 794 to 827 adopts a C2HC pre-PHD-type zinc-finger fold; sequence TAECCLCNLRGGALQMTTDRRWIHVICAIAVPEA. The segment at 850–907 adopts a PHD-type 2 zinc-finger fold; sequence LKCVYCRKRMKKVSGACIQCSYEHCSTSFHVTCAHAAGVLMEPDDWPYVVSITCLKHK. 2 consecutive Tudor domains span residues 917–974 and 975–1031; these read RAVS…CVQL and GPPS…EELP. Positions 1037 to 1073 are disordered; that stretch reads RLSLSTGAPQEPAFSGEEAKAAKRPRVGTPLATEDSG. T1065 is modified (phosphothreonine).

It belongs to the JHDM3 histone demethylase family. It depends on Fe(2+) as a cofactor.

The protein localises to the nucleus. The enzyme catalyses N(6),N(6),N(6)-trimethyl-L-lysyl(9)-[histone H3] + 2 2-oxoglutarate + 2 O2 = N(6)-methyl-L-lysyl(9)-[histone H3] + 2 formaldehyde + 2 succinate + 2 CO2. Its function is as follows. Histone demethylase that specifically demethylates 'Lys-9' of histone H3, thereby playing a role in histone code. Does not demethylate histone H3 'Lys-4', H3 'Lys-27', H3 'Lys-36' nor H4 'Lys-20'. Only able to demethylate trimethylated H3 'Lys-9', with a weaker activity than KDM4A, KDM4C and KDM4D. Demethylation of Lys residue generates formaldehyde and succinate. Plays a critical role in the development of the central nervous system (CNS). The protein is Lysine-specific demethylase 4B (KDM4B) of Homo sapiens (Human).